Here is a 459-residue protein sequence, read N- to C-terminus: Uterine milk protein (459 aa).

Positions Met1–Cys25 are cleaved as a signal peptide. A glycan (N-linked (GlcNAc...) asparagine) is linked at Asn268.

This sequence belongs to the serpin family. UTMP subfamily.

The polypeptide is Uterine milk protein (Bos taurus (Bovine)).